The chain runs to 117 residues: Glycine cleavage system H-like protein (117 aa).

Residues 21–103 form the Lipoyl-binding domain; that stretch reads IVKLGLSSQM…ESEGWFVVLQ (83 aa). Lys62 carries the N6-lipoyllysine modification.

The protein belongs to the GcvH family. The cofactor is (R)-lipoate.

The sequence is that of Glycine cleavage system H-like protein from Chlamydia trachomatis serovar L2 (strain ATCC VR-902B / DSM 19102 / 434/Bu).